Consider the following 256-residue polypeptide: Thiazole synthase (256 aa).

The active-site Schiff-base intermediate with DXP is Lys95. 1-deoxy-D-xylulose 5-phosphate is bound by residues Gly156, 182 to 183 (AG), and 204 to 205 (NT).

It belongs to the ThiG family. In terms of assembly, homotetramer. Forms heterodimers with either ThiH or ThiS.

The protein localises to the cytoplasm. The catalysed reaction is [ThiS sulfur-carrier protein]-C-terminal-Gly-aminoethanethioate + 2-iminoacetate + 1-deoxy-D-xylulose 5-phosphate = [ThiS sulfur-carrier protein]-C-terminal Gly-Gly + 2-[(2R,5Z)-2-carboxy-4-methylthiazol-5(2H)-ylidene]ethyl phosphate + 2 H2O + H(+). It participates in cofactor biosynthesis; thiamine diphosphate biosynthesis. Catalyzes the rearrangement of 1-deoxy-D-xylulose 5-phosphate (DXP) to produce the thiazole phosphate moiety of thiamine. Sulfur is provided by the thiocarboxylate moiety of the carrier protein ThiS. In vitro, sulfur can be provided by H(2)S. The polypeptide is Thiazole synthase (Shigella flexneri).